Reading from the N-terminus, the 211-residue chain is Urease accessory protein UreG (211 aa).

11 to 18 (GPVGAGKT) contacts GTP.

The protein belongs to the SIMIBI class G3E GTPase family. UreG subfamily. In terms of assembly, homodimer. UreD, UreF and UreG form a complex that acts as a GTP-hydrolysis-dependent molecular chaperone, activating the urease apoprotein by helping to assemble the nickel containing metallocenter of UreC. The UreE protein probably delivers the nickel.

It localises to the cytoplasm. Facilitates the functional incorporation of the urease nickel metallocenter. This process requires GTP hydrolysis, probably effectuated by UreG. This Actinobacillus pleuropneumoniae serotype 7 (strain AP76) protein is Urease accessory protein UreG.